A 463-amino-acid polypeptide reads, in one-letter code: Glutamate--tRNA ligase 1 (463 aa).

The 'HIGH' region signature appears at proline 10 to serine 20. The 'KMSKS' region motif lies at lysine 239–arginine 243. Lysine 242 provides a ligand contact to ATP.

It belongs to the class-I aminoacyl-tRNA synthetase family. Glutamate--tRNA ligase type 1 subfamily. In terms of assembly, monomer.

The protein localises to the cytoplasm. The enzyme catalyses tRNA(Glu) + L-glutamate + ATP = L-glutamyl-tRNA(Glu) + AMP + diphosphate. Functionally, catalyzes the attachment of glutamate to tRNA(Glu) in a two-step reaction: glutamate is first activated by ATP to form Glu-AMP and then transferred to the acceptor end of tRNA(Glu). The polypeptide is Glutamate--tRNA ligase 1 (Rickettsia canadensis (strain McKiel)).